The sequence spans 600 residues: Phosphoenolpyruvate carboxykinase (ATP) (600 aa).

302–309 (GLSGTGKT) contacts ATP.

This sequence belongs to the phosphoenolpyruvate carboxykinase (ATP) family.

It catalyses the reaction oxaloacetate + ATP = phosphoenolpyruvate + ADP + CO2. Its pathway is carbohydrate biosynthesis; gluconeogenesis. In Emericella nidulans (strain FGSC A4 / ATCC 38163 / CBS 112.46 / NRRL 194 / M139) (Aspergillus nidulans), this protein is Phosphoenolpyruvate carboxykinase (ATP) (acuF).